The primary structure comprises 567 residues: Hydrogenase-2 large chain (567 aa).

Ni(2+)-binding residues include Cys-61, Cys-64, Cys-546, and Cys-549. The propeptide occupies 553 to 567 (VVDADGNEVVSVKVL).

This sequence belongs to the [NiFe]/[NiFeSe] hydrogenase large subunit family. As to quaternary structure, heterodimer of a large and a small subunit. Requires Ni(2+) as cofactor.

Its subcellular location is the cell membrane. It catalyses the reaction H2 + A = AH2. This is one of three E.coli hydrogenases synthesized in response to different physiological conditions. HYD2 is involved in hydrogen uptake. In Escherichia coli O157:H7, this protein is Hydrogenase-2 large chain (hybC).